A 394-amino-acid polypeptide reads, in one-letter code: Sugar efflux transporter C (394 aa).

Residues 1 to 10 (MQKTATTPSK) lie on the Periplasmic side of the membrane. Residues 11–31 (ILDLTAAAFLLVAFLTGIAGA) traverse the membrane as a helical segment. The Cytoplasmic portion of the chain corresponds to 32-49 (LQTPTLSIFLADELKARP). A helical membrane pass occupies residues 50–70 (IMVGFFFTGSAIMGILVSQFL). Residues 71-80 (ARHSDKQGDR) are Periplasmic-facing. A helical transmembrane segment spans residues 81–101 (KLLILLCCLFGVLACTLFAWN). Topologically, residues 102–104 (RNY) are cytoplasmic. The chain crosses the membrane as a helical span at residues 105 to 125 (FILLSTGVLLSSFASTANPQM). The Periplasmic portion of the chain corresponds to 126 to 150 (FALAREHADRTGRETVMFSTFLRAQ). The helical transmembrane segment at 151–171 (ISLAWVIGPPLAYELAMGFSF) threads the bilayer. Residue Lys-172 is a topological domain, cytoplasmic. Residues 173–193 (VMYLTAAIAFVVCGLIVWLFL) traverse the membrane as a helical segment. At 194 to 224 (PSIQRNIPVVTQPVEILPSTHRKRDTRLLFV) the chain is on the periplasmic side. The helical transmembrane segment at 225–245 (VCSMMWAANNLYMINMPLFII) threads the bilayer. Over 246–253 (DELHLTDK) the chain is Cytoplasmic. Residues 254-274 (LTGEMIGIAAGLEIPMMLIAG) form a helical membrane-spanning segment. The Periplasmic portion of the chain corresponds to 275 to 283 (YYMKRIGKR). A helical transmembrane segment spans residues 284-304 (LLMLIAIVSGMCFYASVLMAT). Topologically, residues 305-310 (TPAVEL) are cytoplasmic. A helical membrane pass occupies residues 311–331 (ELQILNAIFLGILCGIGMLYF). Residues 332-370 (QDLMPEKIGSATTLYANTSRVGWIIAGSVDGIMVEIWSY) lie on the Periplasmic side of the membrane. The chain crosses the membrane as a helical span at residues 371–391 (HALFWLAIGMLGIAMICLLFI). Residues 392–394 (KDI) lie on the Cytoplasmic side of the membrane.

Belongs to the major facilitator superfamily. Set transporter family.

Its subcellular location is the cell inner membrane. Functionally, involved in the efflux of sugars. The physiological role may be the detoxification of non-metabolizable sugar analogs. The chain is Sugar efflux transporter C (setC) from Escherichia coli (strain K12).